The sequence spans 65 residues: Large ribosomal subunit protein bL35c (65 aa).

Over residues 25-44 the composition is skewed to basic residues; the sequence is HKASKSHLLQKKSSKQRRHL. The disordered stretch occupies residues 25-45; it reads HKASKSHLLQKKSSKQRRHLS.

This sequence belongs to the bacterial ribosomal protein bL35 family.

The protein resides in the plastid. Its subcellular location is the chloroplast. This is Large ribosomal subunit protein bL35c from Pyropia yezoensis (Susabi-nori).